The chain runs to 992 residues: Aminopeptidase Q (992 aa).

The Cytoplasmic segment spans residues 2–13 (GPPSSSGFYVSR). The helical; Signal-anchor for type II membrane protein transmembrane segment at 14–34 (AVALLLAALAAALLLALAVLA) threads the bilayer. Residues 35-992 (ALYGRCARVQ…RMTAWLRKNT (958 aa)) are Extracellular-facing. Positions 48 to 92 (LHHGGVPDAASSPRGTQEEQLPTWPPRPTREPAGTATPGHWRPPG) are disordered. Asn133 carries an N-linked (GlcNAc...) asparagine glycan. Glu241 serves as a coordination point for substrate. N-linked (GlcNAc...) asparagine glycans are attached at residues Asn262, Asn289, Asn347, and Asn361. Residue 380–384 (SAMEN) participates in substrate binding. His416 contacts Zn(2+). The active-site Proton acceptor is Glu417. Positions 420 and 439 each coordinate Zn(2+). N-linked (GlcNAc...) asparagine glycosylation is present at Asn489. The active-site Proton donor is Tyr505. N-linked (GlcNAc...) asparagine glycosylation is found at Asn584, Asn602, Asn609, Asn655, Asn811, Asn850, and Asn889.

It belongs to the peptidase M1 family. The cofactor is Zn(2+). As to expression, expressed in skin. Expression levels do not differ between dark and light skin areas.

It is found in the membrane. Metalloprotease which may be important for placentation by regulating biological activity of key peptides at the embryo-maternal interface. Involved in coat pigmentation patterns. During skin development, may be required to establish the periodicity of tabby markings, initiating a pre-pattern at or before hair follicle development. The sequence is that of Aminopeptidase Q (LVRN) from Acinonyx jubatus (Cheetah).